A 367-amino-acid polypeptide reads, in one-letter code: Germination protease (367 aa).

A propeptide spanning residues 1-13 (MEEQQIPFQVRTD) is cleaved from the precursor. The disordered stretch occupies residues 267-287 (KDDPSKSLTPAGMSFGNRKLT).

The protein belongs to the peptidase A25 family. As to quaternary structure, homotetramer. Post-translationally, autoproteolytically processed. The inactive tetrameric zymogen termed p46 autoprocesses to a smaller form termed p41, which is active only during spore germination.

The catalysed reaction is Endopeptidase action with P4 Glu or Asp, P1 preferably Glu &gt; Asp, P1' hydrophobic and P2' Ala.. Functionally, initiates the rapid degradation of small, acid-soluble proteins during spore germination. The sequence is that of Germination protease from Oceanobacillus iheyensis (strain DSM 14371 / CIP 107618 / JCM 11309 / KCTC 3954 / HTE831).